The sequence spans 810 residues: Lon protease (810 aa).

The region spanning 40–233 (LIIVPVRGFV…MVAKLLAQRI (194 aa)) is the Lon N-terminal domain. 385–392 (GPPGVGKT) is a binding site for ATP. The 182-residue stretch at 621–802 (LSVPGVATGL…DDAMAAAFEG (182 aa)) folds into the Lon proteolytic domain. Active-site residues include serine 708 and lysine 751.

It belongs to the peptidase S16 family. As to quaternary structure, homohexamer. Organized in a ring with a central cavity.

The protein localises to the cytoplasm. The catalysed reaction is Hydrolysis of proteins in presence of ATP.. In terms of biological role, ATP-dependent serine protease that mediates the selective degradation of mutant and abnormal proteins as well as certain short-lived regulatory proteins. Required for cellular homeostasis and for survival from DNA damage and developmental changes induced by stress. Degrades polypeptides processively to yield small peptide fragments that are 5 to 10 amino acids long. Binds to DNA in a double-stranded, site-specific manner. This Methylocella silvestris (strain DSM 15510 / CIP 108128 / LMG 27833 / NCIMB 13906 / BL2) protein is Lon protease.